The following is a 53-amino-acid chain: Small, acid-soluble spore protein K (53 aa).

The tract at residues 1–53 is disordered; it reads MGRQAEFWSESKNNSKIDGQPKAKARFASKRPNGTINTHPQERMRAANQQEEE.

It belongs to the SspK family.

Its subcellular location is the spore core. This chain is Small, acid-soluble spore protein K, found in Bacillus cytotoxicus (strain DSM 22905 / CIP 110041 / 391-98 / NVH 391-98).